Consider the following 439-residue polypeptide: Xaa-Pro dipeptidase (439 aa).

The Mn(2+) site is built by Asp244, Asp255, His335, Glu380, and Glu419.

This sequence belongs to the peptidase M24B family. Bacterial-type prolidase subfamily. It depends on Mn(2+) as a cofactor.

It carries out the reaction Xaa-L-Pro dipeptide + H2O = an L-alpha-amino acid + L-proline. Splits dipeptides with a prolyl residue in the C-terminal position. This chain is Xaa-Pro dipeptidase, found in Shewanella sp. (strain MR-7).